The following is a 121-amino-acid chain: Large ribosomal subunit protein uL18 (121 aa).

The protein belongs to the universal ribosomal protein uL18 family. As to quaternary structure, part of the 50S ribosomal subunit; part of the 5S rRNA/L5/L18/L25 subcomplex. Contacts the 5S and 23S rRNAs.

This is one of the proteins that bind and probably mediate the attachment of the 5S RNA into the large ribosomal subunit, where it forms part of the central protuberance. The sequence is that of Large ribosomal subunit protein uL18 from Paraburkholderia phytofirmans (strain DSM 17436 / LMG 22146 / PsJN) (Burkholderia phytofirmans).